The primary structure comprises 318 residues: Malonyl CoA-acyl carrier protein transacylase, mitochondrial (318 aa).

Belongs to the FabD family.

It localises to the mitochondrion. It carries out the reaction holo-[ACP] + malonyl-CoA = malonyl-[ACP] + CoA. Its pathway is lipid metabolism; fatty acid biosynthesis. In terms of biological role, involved in biosynthesis of fatty acids in mitochondria. This is Malonyl CoA-acyl carrier protein transacylase, mitochondrial (mct1) from Schizosaccharomyces pombe (strain 972 / ATCC 24843) (Fission yeast).